The chain runs to 391 residues: Chorismate synthase (391 aa).

Arg48 contacts NADP(+). Residues 126–128 (RAS), Gly286, 301–305 (KPTSS), and Arg328 each bind FMN.

This sequence belongs to the chorismate synthase family. FMNH2 is required as a cofactor.

It catalyses the reaction 5-O-(1-carboxyvinyl)-3-phosphoshikimate = chorismate + phosphate. It participates in metabolic intermediate biosynthesis; chorismate biosynthesis; chorismate from D-erythrose 4-phosphate and phosphoenolpyruvate: step 7/7. Its function is as follows. Catalyzes the anti-1,4-elimination of the C-3 phosphate and the C-6 proR hydrogen from 5-enolpyruvylshikimate-3-phosphate (EPSP) to yield chorismate, which is the branch point compound that serves as the starting substrate for the three terminal pathways of aromatic amino acid biosynthesis. This reaction introduces a second double bond into the aromatic ring system. This Saccharolobus islandicus (strain M.16.27) (Sulfolobus islandicus) protein is Chorismate synthase.